We begin with the raw amino-acid sequence, 190 residues long: Nuclear transcription factor Y subunit A-7 (190 aa).

The segment at 1–33 is disordered; sequence MTSSIHELSDNIGSHEKQEQRDSHFQPPIPSAR. Residues 7–24 show a composition bias toward basic and acidic residues; sequence ELSDNIGSHEKQEQRDSH. Residues 103-126 carry the Subunit association domain (SAD) motif; the sequence is FVNAKQYHGILRRRQSRARLESQN. Positions 133–158 form a DNA-binding region, NFYA/HAP2-type; the sequence is KPYLHESRHLHAIRRPRGCGGRFLNA. Residues 147–190 are disordered; sequence RPRGCGGRFLNAKKEDEHHEDSSHEEKSNLSAGKSAMAASSGTS. A compositionally biased stretch (basic and acidic residues) spans 158–174; that stretch reads AKKEDEHHEDSSHEEKS. Positions 177–190 are enriched in low complexity; the sequence is SAGKSAMAASSGTS.

Belongs to the NFYA/HAP2 subunit family. In terms of assembly, heterotrimeric transcription factor composed of three components, NF-YA, NF-YB and NF-YC. NF-YB and NF-YC must interact and dimerize for NF-YA association and DNA binding.

Its subcellular location is the nucleus. Stimulates the transcription of various genes by recognizing and binding to a CCAAT motif in promoters. This is Nuclear transcription factor Y subunit A-7 (NFYA7) from Arabidopsis thaliana (Mouse-ear cress).